A 105-amino-acid chain; its full sequence is uncharacterized protein (105 aa).

This sequence belongs to the EspC family.

In terms of biological role, may be involved in assembly of the ESX-1 / type VII specialized secretion system (T7SS), which exports several proteins including EsxA and EsxB. Involved in DNA conjugation, in at least recipient strain. This is an uncharacterized protein from Mycolicibacterium smegmatis (strain MKD8) (Mycobacterium smegmatis).